The sequence spans 420 residues: UDP-N-acetylglucosamine 1-carboxyvinyltransferase (420 aa).

22 to 23 (KN) provides a ligand contact to phosphoenolpyruvate. Arg-93 is a UDP-N-acetyl-alpha-D-glucosamine binding site. Cys-117 functions as the Proton donor in the catalytic mechanism. Cys-117 bears the 2-(S-cysteinyl)pyruvic acid O-phosphothioketal mark. UDP-N-acetyl-alpha-D-glucosamine is bound by residues Asp-307 and Ile-329.

Belongs to the EPSP synthase family. MurA subfamily.

It is found in the cytoplasm. The enzyme catalyses phosphoenolpyruvate + UDP-N-acetyl-alpha-D-glucosamine = UDP-N-acetyl-3-O-(1-carboxyvinyl)-alpha-D-glucosamine + phosphate. Its pathway is cell wall biogenesis; peptidoglycan biosynthesis. Cell wall formation. Adds enolpyruvyl to UDP-N-acetylglucosamine. The chain is UDP-N-acetylglucosamine 1-carboxyvinyltransferase from Shewanella halifaxensis (strain HAW-EB4).